A 481-amino-acid chain; its full sequence is ATP synthase subunit beta, chloroplastic (481 aa).

An ATP-binding site is contributed by 162 to 169; the sequence is GGAGVGKT.

Belongs to the ATPase alpha/beta chains family. In terms of assembly, F-type ATPases have 2 components, CF(1) - the catalytic core - and CF(0) - the membrane proton channel. CF(1) has five subunits: alpha(3), beta(3), gamma(1), delta(1), epsilon(1). CF(0) has four main subunits: a(1), b(1), b'(1) and c(9-12).

It localises to the plastid. The protein resides in the chloroplast thylakoid membrane. The enzyme catalyses ATP + H2O + 4 H(+)(in) = ADP + phosphate + 5 H(+)(out). Its function is as follows. Produces ATP from ADP in the presence of a proton gradient across the membrane. The catalytic sites are hosted primarily by the beta subunits. The sequence is that of ATP synthase subunit beta, chloroplastic from Chlorella vulgaris (Green alga).